Consider the following 104-residue polypeptide: L-rhamnose mutarotase (104 aa).

Substrate is bound at residue Y18. The active-site Proton donor is H22. Residues Y41 and 76–77 contribute to the substrate site; that span reads WW.

The protein belongs to the rhamnose mutarotase family. In terms of assembly, homodimer.

The protein localises to the cytoplasm. It carries out the reaction alpha-L-rhamnose = beta-L-rhamnose. Its pathway is carbohydrate metabolism; L-rhamnose metabolism. Its function is as follows. Involved in the anomeric conversion of L-rhamnose. In Acidiphilium cryptum (strain JF-5), this protein is L-rhamnose mutarotase.